The chain runs to 233 residues: Protease inhibitor Egf1.0 (233 aa).

The signal sequence occupies residues 1-28 (MYIDTGIMSNNIFLFAFFALVGLTRIEA). Residues 52–104 (CRENEHYNSTRIECEEECNDRNNKLCYRFQQFCWCNEGYIRNSSHICVKLEDC) enclose the TIL domain. Residues 201–233 (FGKPKNSSAEKKPLETETQAQKFNGIIDQETLD) form a disordered region.

Belongs to the polydnaviridae EGF-like motif protein family. As to quaternary structure, interacts with host PAP1 and PAP3.

Functionally, counteracts the host humoral immune response by inhibiting the processing and the amidolytic activity of host PAP3. Thereby, melanization of host hemolymph, normally producing several reactive intermediates toxic for viruses, is deregulated and proper immune response cannot occur. In Microplitis demolitor (Parasitoid wasp), this protein is Protease inhibitor Egf1.0 (O12).